A 373-amino-acid chain; its full sequence is Sensor protein DegM (373 aa).

4 helical membrane-spanning segments follow: residues 27 to 47, 57 to 77, 91 to 111, and 122 to 142; these read ILLA…AIAV, LFLL…LCVN, YASL…LYLI, and VAGW…TYLF. Positions 170-370 constitute a Histidine kinase domain; that stretch reads SIAHEVRNPL…KVVLSLPIEK (201 aa). Phosphohistidine; by autocatalysis is present on H173.

The protein resides in the cell membrane. It catalyses the reaction ATP + protein L-histidine = ADP + protein N-phospho-L-histidine.. Its function is as follows. Involved in a sensory transduction pathway that enhances the production of minor proteases. This is Sensor protein DegM (degM) from Bacillus sp. (strain B21-2).